Reading from the N-terminus, the 338-residue chain is MARKLFTPWTVKDVTIKNRIVMAPMCMYSSHEKDGKLQPFHMAHYISRAIGQVGLIIVEATAVNPQGRISDQDLGIWSDDHIEGFAKLTEQVKAQGSKIGIQLAHAGRKAELEGDIYAPSAIPFDEQSKTPAEMTTEQIKETIQEFKQAAARAKEAGFDIIELHAAHGYLMHEFLSPLSNHRTDEYGGSHENRYRFLGETIEAVKEVWDGPLFVRISASDYTDKGLDIADHIGFAKWMKEQGVDLIDCSSGALVQADINVFPGYQVSFAEKIREQAEIATGAVGLITTGTMAEEILQNNRADLIFVARELLRDPHFARSAAKQLNTEIPSPVQYDRAW.

Y28 serves as a coordination point for substrate. Positions 60 and 102 each coordinate FMN. 164-167 (HAAH) is a binding site for substrate. Residues R215 and 307 to 308 (AR) each bind FMN.

Belongs to the NADH:flavin oxidoreductase/NADH oxidase family. NamA subfamily. Homotetramer. FMN serves as cofactor.

The enzyme catalyses A + NADPH + H(+) = AH2 + NADP(+). Its function is as follows. Catalyzes the reduction of the double bond of an array of alpha,beta-unsaturated aldehydes and ketones. It also reduces the nitro group of nitroester and nitroaromatic compounds. It could have a role in detoxification processes. The polypeptide is NADPH dehydrogenase (Bacillus velezensis (strain DSM 23117 / BGSC 10A6 / LMG 26770 / FZB42) (Bacillus amyloliquefaciens subsp. plantarum)).